The chain runs to 456 residues: Anthocyanidin 3-O-glucosyltransferase UFGT (456 aa).

A kaempferol-binding site is contributed by Ser-18. Quercetin is bound at residue Ser-18. Thr-19 serves as a coordination point for UDP. Thr-19 is a UDP-alpha-D-glucose binding site. Kaempferol-binding residues include His-20 and Gln-84. The active-site Proton acceptor is the His-20. Position 84 (Gln-84) interacts with quercetin. The active-site Charge relay is Asp-119. Thr-141 is a UDP-alpha-D-glucose binding site. Residues His-150 and Gln-188 each contribute to the kaempferol site. Quercetin-binding residues include His-150 and Gln-188. UDP contacts are provided by Thr-280, Ser-306, Trp-332, Ala-333, and His-350. 9 residues coordinate UDP-alpha-D-glucose: Thr-280, Ser-306, Trp-332, Ala-333, His-350, Trp-353, Asn-354, Ser-355, and Glu-358. UDP is bound by residues Asn-354, Ser-355, and Glu-358. Gly-373 provides a ligand contact to quercetin. UDP-alpha-D-glucose is bound by residues Asp-374 and Gln-375.

This sequence belongs to the UDP-glycosyltransferase family. In terms of tissue distribution, detected only in berry skin.

It catalyses the reaction an anthocyanidin + UDP-alpha-D-glucose + H(+) = an anthocyanidin 3-O-beta-D-glucoside + UDP. The enzyme catalyses cyanidin + UDP-alpha-D-glucose = cyanidin 3-O-beta-D-glucoside + UDP + H(+). The catalysed reaction is delphinidin + UDP-alpha-D-glucose = delphinidin 3-O-beta-D-glucoside + UDP. It carries out the reaction peonidin + UDP-alpha-D-glucose = peonidin 3-O-beta-D-glucoside + UDP. It catalyses the reaction pelargonidin + UDP-alpha-D-glucose = pelargonidin 3-O-beta-D-glucoside + UDP. The enzyme catalyses malvidin + UDP-alpha-D-glucose = malvidin 3-O-beta-D-glucoside + UDP. The catalysed reaction is a flavonol + UDP-alpha-D-glucose = a flavonol 3-O-beta-D-glucoside + UDP + H(+). The protein operates within pigment biosynthesis; anthocyanin biosynthesis. With respect to regulation, inhibited by Mn(2+) and Zn(2+). In terms of biological role, in the presence of other necessary color factors, this glycosylation reaction allows the accumulation of anthocyanin pigments. Involved in the formation of red wine pigments. UDP-glucose (UDP-Glc) is the physiological sugar donor, and cyanidin is the natural acceptor in vivo. Can glucosylate the anthocyanidins delphinidin, peonidin, pelargonidin and malvidin. The flavonols quercitin and kaempferol can also be glucosylated in vitro, but with glucosylation rates 50-100 times lower than cyanidin. In vitro, can use UDP-Glc, UDP-5SGlc, UDP-Xyl, UDP-Man, UDP-Gal, UDP-GlcNAc, GDP-Glc, dTDP-Glc and dTDP-Xyl as sugar donors, but not UDP-6OMeGal, UDP-Ara, UDP-6FGal, UDP-GlcN, UDP-2FGal, UDP-5SAra, GDP-Man, GDP-Fuc, UDP-Fuc or UDP-Rha. This Vitis vinifera (Grape) protein is Anthocyanidin 3-O-glucosyltransferase UFGT.